A 283-amino-acid chain; its full sequence is ATP phosphoribosyltransferase (283 aa).

The protein belongs to the ATP phosphoribosyltransferase family. Long subfamily. Mg(2+) is required as a cofactor.

It is found in the cytoplasm. It catalyses the reaction 1-(5-phospho-beta-D-ribosyl)-ATP + diphosphate = 5-phospho-alpha-D-ribose 1-diphosphate + ATP. Its pathway is amino-acid biosynthesis; L-histidine biosynthesis; L-histidine from 5-phospho-alpha-D-ribose 1-diphosphate: step 1/9. Feedback inhibited by histidine. Functionally, catalyzes the condensation of ATP and 5-phosphoribose 1-diphosphate to form N'-(5'-phosphoribosyl)-ATP (PR-ATP). Has a crucial role in the pathway because the rate of histidine biosynthesis seems to be controlled primarily by regulation of HisG enzymatic activity. This chain is ATP phosphoribosyltransferase, found in Rhodococcus erythropolis (strain PR4 / NBRC 100887).